The sequence spans 100 residues: Large ribosomal subunit protein eL30 (100 aa).

The protein belongs to the eukaryotic ribosomal protein eL30 family.

This is Large ribosomal subunit protein eL30 (rpl30e) from Aeropyrum pernix (strain ATCC 700893 / DSM 11879 / JCM 9820 / NBRC 100138 / K1).